The primary structure comprises 395 residues: Phosphopentomutase (395 aa).

6 residues coordinate Mn(2+): aspartate 10, aspartate 294, histidine 299, aspartate 335, histidine 336, and histidine 347.

The protein belongs to the phosphopentomutase family. Mn(2+) is required as a cofactor.

It is found in the cytoplasm. The enzyme catalyses 2-deoxy-alpha-D-ribose 1-phosphate = 2-deoxy-D-ribose 5-phosphate. It catalyses the reaction alpha-D-ribose 1-phosphate = D-ribose 5-phosphate. The protein operates within carbohydrate degradation; 2-deoxy-D-ribose 1-phosphate degradation; D-glyceraldehyde 3-phosphate and acetaldehyde from 2-deoxy-alpha-D-ribose 1-phosphate: step 1/2. Isomerase that catalyzes the conversion of deoxy-ribose 1-phosphate (dRib-1-P) and ribose 1-phosphate (Rib-1-P) to deoxy-ribose 5-phosphate (dRib-5-P) and ribose 5-phosphate (Rib-5-P), respectively. The sequence is that of Phosphopentomutase from Actinobacillus succinogenes (strain ATCC 55618 / DSM 22257 / CCUG 43843 / 130Z).